The sequence spans 836 residues: General negative regulator of transcription subunit 3 (836 aa).

Coiled coils occupy residues 36-68 (NNPS…WQSS), 119-195 (RERR…ANEE), and 255-292 (NTSD…AKNA). Residues 252–267 (EDNNTSDANESLQDIS) are compositionally biased toward polar residues. Disordered stretches follow at residues 252–284 (EDNN…AKKA), 296–391 (AIPV…LKPA), 410–471 (AVEK…NTGA), and 513–532 (NPKS…PENT). The segment covering 268 to 283 (KLSKKEQRKLEREAKK) has biased composition (basic and acidic residues). 3 positions are modified to phosphoserine: Ser303, Ser307, and Ser322. The span at 341 to 386 (SIKSPRSSADNLLPSLQKSPSSATPETPTNVHTHIHQTPNGITGAT) shows a compositional bias: polar residues. Low complexity predominate over residues 418–446 (TSASSTISNTSTKTPTTAAATTTSSNANS). A phosphoserine mark is found at Ser446 and Ser450. Polar residues-rich tracts occupy residues 447–468 (RIGS…QPDN) and 522–531 (TTVNQNGPEN). Lys535 participates in a covalent cross-link: Glycyl lysine isopeptide (Lys-Gly) (interchain with G-Cter in ubiquitin). Positions 537–583 (MEQKEEESPEERNKLQVPTFGVFDDDFESDRDSETEPEEEEQPSTPK) are disordered. Positions 559–578 (FDDDFESDRDSETEPEEEEQ) are enriched in acidic residues. 2 positions are modified to phosphoserine: Ser565 and Ser569. The residue at position 571 (Thr571) is a Phosphothreonine. Ser657 bears the Phosphoserine mark. Positions 803 to 831 (NVNDQSNVTLEQQKQEISHGKQLLKQLKQ) form a coiled coil.

Belongs to the CNOT2/3/5 family. Forms a NOT protein complex that comprises NOT1, NOT2, NOT3, NOT4 and NOT5. Subunit of the 1.0 MDa CCR4-NOT core complex that contains CCR4, CAF1, NOT1, NOT2, NOT3, NOT4, NOT5, CAF40 and CAF130. The core complex probably is part of a less characterized 1.9 MDa CCR4-NOT complex.

It is found in the cytoplasm. The protein resides in the nucleus. Its function is as follows. Acts as a component of the CCR4-NOT core complex, which in the nucleus seems to be a general transcription factor, and in the cytoplasm the major mRNA deadenylase involved in mRNA turnover. The NOT protein subcomplex negatively regulates the basal and activated transcription of many genes. Preferentially affects TC-type TATA element-dependent transcription. Could directly or indirectly inhibit component(s) of the general transcription machinery. The sequence is that of General negative regulator of transcription subunit 3 (NOT3) from Saccharomyces cerevisiae (strain ATCC 204508 / S288c) (Baker's yeast).